The following is a 141-amino-acid chain: Putative pre-16S rRNA nuclease (141 aa).

Belongs to the YqgF nuclease family.

It localises to the cytoplasm. Functionally, could be a nuclease involved in processing of the 5'-end of pre-16S rRNA. This chain is Putative pre-16S rRNA nuclease, found in Sodalis glossinidius (strain morsitans).